Reading from the N-terminus, the 199-residue chain is Protein GrpE (199 aa).

Residues 1–50 (MAKKSTRTTPEDSQASTTDSAATSTASEATQAATSATDDQAEQTTAVDPT) are disordered. Residues 11–46 (EDSQASTTDSAATSTASEATQAATSATDDQAEQTTA) are compositionally biased toward low complexity.

This sequence belongs to the GrpE family. As to quaternary structure, homodimer.

Its subcellular location is the cytoplasm. Participates actively in the response to hyperosmotic and heat shock by preventing the aggregation of stress-denatured proteins, in association with DnaK and GrpE. It is the nucleotide exchange factor for DnaK and may function as a thermosensor. Unfolded proteins bind initially to DnaJ; upon interaction with the DnaJ-bound protein, DnaK hydrolyzes its bound ATP, resulting in the formation of a stable complex. GrpE releases ADP from DnaK; ATP binding to DnaK triggers the release of the substrate protein, thus completing the reaction cycle. Several rounds of ATP-dependent interactions between DnaJ, DnaK and GrpE are required for fully efficient folding. The polypeptide is Protein GrpE (Lactiplantibacillus plantarum (strain ATCC BAA-793 / NCIMB 8826 / WCFS1) (Lactobacillus plantarum)).